Here is a 125-residue protein sequence, read N- to C-terminus: Cu-Zn superoxide dismutase-like protein OPG175 (125 aa).

C52 and C102 are joined by a disulfide.

This sequence belongs to the Cu-Zn superoxide dismutase family.

It localises to the virion. It is found in the host cytoplasm. Its function is as follows. Superoxide dismutase-like protein with no enzymatic activity. The protein is Cu-Zn superoxide dismutase-like protein OPG175 (OPG175) of Monkeypox virus.